The sequence spans 288 residues: Mortality factor 4-like protein 2 (288 aa).

Over residues 1 to 15 (MSSRKQGSQPRGQQS) the composition is skewed to polar residues. Residues 1–113 (MSSRKQGSQP…RADPTVESEE (113 aa)) are disordered. Ser-71 is subject to Phosphoserine. The 172-residue stretch at 117–288 (NRMEVKVKIP…ASAEYHRKAL (172 aa)) folds into the MRG domain.

Component of the NuA4 histone acetyltransferase complex which contains the catalytic subunit KAT5/TIP60 and the subunits EP400, TRRAP/PAF400, BRD8/SMAP, EPC1, DMAP1/DNMAP1, RUVBL1/TIP49, RUVBL2, ING3, actin, ACTL6A/BAF53A, MORF4L1/MRG15, MORF4L2/MRGX, MRGBP, YEATS4/GAS41 and VPS72/YL1. The NuA4 complex interacts with MYC and the adenovirus E1A protein. MORF4L1 may also participate in the formation of NuA4 related complexes which lack the KAT5/TIP60 catalytic subunit, but which include the SWI/SNF related protein SRCAP. Component of the MSIN3A histone deacetylase complex, which includes SIN3A, HDAC2, ARID4B, MORF4L1, RBBP4/RbAp48, and RBBP7/RbAp46. Interacts with MRFAP1 and RB1. May also interact with one or more as yet undefined members of the TLE (transducin-like enhancer of split) family of transcriptional repressors.

It localises to the nucleus. In terms of biological role, component of the NuA4 histone acetyltransferase complex which is involved in transcriptional activation of select genes principally by acetylation of nucleosomal histone H4 and H2A. This modification may both alter nucleosome - DNA interactions and promote interaction of the modified histones with other proteins which positively regulate transcription. This complex may be required for the activation of transcriptional programs associated with oncogene and proto-oncogene mediated growth induction, tumor suppressor mediated growth arrest and replicative senescence, apoptosis, and DNA repair. The NuA4 complex ATPase and helicase activities seem to be, at least in part, contributed by the association of RUVBL1 and RUVBL2 with EP400. NuA4 may also play a direct role in DNA repair when directly recruited to sites of DNA damage. Also a component of the MSIN3A complex which acts to repress transcription by deacetylation of nucleosomal histones. This Homo sapiens (Human) protein is Mortality factor 4-like protein 2 (MORF4L2).